We begin with the raw amino-acid sequence, 126 residues long: Large ribosomal subunit protein bL17 (126 aa).

The protein belongs to the bacterial ribosomal protein bL17 family. Part of the 50S ribosomal subunit. Contacts protein L32.

In Magnetococcus marinus (strain ATCC BAA-1437 / JCM 17883 / MC-1), this protein is Large ribosomal subunit protein bL17.